A 452-amino-acid polypeptide reads, in one-letter code: Cobyrinate a,c-diamide synthase (452 aa).

Positions 248–441 (RVAYALDAAF…LHIHFYQNPA (194 aa)) constitute a GATase cobBQ-type domain. The active-site Nucleophile is the cysteine 330.

It belongs to the CobB/CbiA family. The cofactor is Mg(2+).

It carries out the reaction cob(II)yrinate + 2 L-glutamine + 2 ATP + 2 H2O = cob(II)yrinate a,c diamide + 2 L-glutamate + 2 ADP + 2 phosphate + 2 H(+). The protein operates within cofactor biosynthesis; adenosylcobalamin biosynthesis; cob(II)yrinate a,c-diamide from sirohydrochlorin (anaerobic route): step 10/10. Functionally, catalyzes the ATP-dependent amidation of the two carboxylate groups at positions a and c of cobyrinate, using either L-glutamine or ammonia as the nitrogen source. The sequence is that of Cobyrinate a,c-diamide synthase from Listeria innocua serovar 6a (strain ATCC BAA-680 / CLIP 11262).